An 827-amino-acid chain; its full sequence is Villin-1 (827 aa).

The necessary for homodimerization stretch occupies residues 1–126 (MTKLSAQVKG…IRKGGVASGM (126 aa)). The interval 1–734 (MTKLSAQVKG…YEDLKAELGN (734 aa)) is core. The Gelsolin-like 1 repeat unit spans residues 27–76 (MQMVPVPSNSFGSFFDGDCYVIQAIHKTGSNLSYDIHYWIGQASSQDEQG). LPA/PIP2-binding site regions lie at residues 112 to 119 (KKGIVIRK) and 138 to 146 (RLLHVKGKR). Gelsolin-like repeat units follow at residues 148–188 (VVAG…MERL) and 265–309 (VVVR…QEKK). Serine 366 carries the phosphoserine modification. Gelsolin-like repeat units lie at residues 407–457 (NLEL…DEIT), 528–568 (TKAF…DERE), and 631–672 (FLAT…DEKK). Serine 735 is modified (phosphoserine). The tract at residues 735–827 (SGDWSQITAE…QNLKKEKGLF (93 aa)) is headpiece. An HP domain is found at 761–827 (SGPLPIFPLE…QNLKKEKGLF (67 aa)). The LPA/PIP2-binding site 3 stretch occupies residues 816–824 (KQQNLKKEK).

This sequence belongs to the villin/gelsolin family. As to quaternary structure, monomer. Homodimer; homodimerization is necessary for actin-bundling. Associates with F-actin; phosphorylation at tyrosine residues decreases the association with F-actin. Interacts (phosphorylated at C-terminus tyrosine phosphorylation sites) with PLCG1 (via the SH2 domains). Interacts (phosphorylated form) with PLCG1; the interaction is enhanced by hepatocyte growth factor (HGF). Post-translationally, phosphorylated on tyrosine residues by SRC. The unphosphorylated form increases the initial rate of actin-nucleating activity, whereas the tyrosine-phosphorylated form inhibits actin-nucleating activity, enhances actin-bundling activity and enhances actin-severing activity by reducing high Ca(2+) requirements. The tyrosine-phosphorylated form does not regulate actin-capping activity. Tyrosine phosphorylation is essential for cell migration: tyrosine phosphorylation sites in the N-terminus half regulate actin reorganization and cell morphology, whereas tyrosine phosphorylation sites in the C-terminus half regulate cell migration via interaction with PLCG1. Tyrosine phosphorylation is induced by epidermal growth factor (EGF) and stimulates cell migration.

The protein localises to the cytoplasm. Its subcellular location is the cytoskeleton. It localises to the cell projection. It is found in the lamellipodium. The protein resides in the ruffle. The protein localises to the microvillus. Its subcellular location is the filopodium tip. It localises to the filopodium. In terms of biological role, epithelial cell-specific Ca(2+)-regulated actin-modifying protein that modulates the reorganization of microvillar actin filaments. Plays a role in the actin nucleation, actin filament bundle assembly, actin filament capping and severing. Binds phosphatidylinositol 4,5-bisphosphate (PIP2) and lysophosphatidic acid (LPA); binds LPA with higher affinity than PIP2. Binding to LPA increases its phosphorylation by SRC and inhibits all actin-modifying activities. Binding to PIP2 inhibits actin-capping and -severing activities but enhances actin-bundling activity. Regulates the intestinal epithelial cell morphology, cell invasion, cell migration and apoptosis. Protects against apoptosis induced by dextran sodium sulfate (DSS) in the gastrointestinal epithelium. Appears to regulate cell death by maintaining mitochondrial integrity. Enhances hepatocyte growth factor (HGF)-induced epithelial cell motility, chemotaxis and wound repair. This Bos taurus (Bovine) protein is Villin-1 (VIL1).